We begin with the raw amino-acid sequence, 78 residues long: Esculentin-2Vb (78 aa).

Positions 1–22 are cleaved as a signal peptide; the sequence is MFTMKKSLLLLFFLGTISLSLC. The propeptide occupies 23–39; that stretch reads EEERGADEEEGDGEKLM. C72 and C78 are disulfide-bonded.

In terms of tissue distribution, expressed by the skin glands.

It localises to the secreted. Antimicrobial peptide. The sequence is that of Esculentin-2Vb from Odorrana versabilis (Chinese bamboo leaf odorous frog).